Here is a 354-residue protein sequence, read N- to C-terminus: DNA integrity scanning protein DisA (354 aa).

The DAC domain maps to 6-144; it reads GMKIKDTLKI…GDIKYVLRDS (139 aa). ATP is bound by residues G73, L91, and 104 to 108; that span reads TRHRT.

It belongs to the DisA family. As to quaternary structure, homooctamer. It depends on Mg(2+) as a cofactor.

It catalyses the reaction 2 ATP = 3',3'-c-di-AMP + 2 diphosphate. Its function is as follows. Participates in a DNA-damage check-point that is active prior to asymmetric division when DNA is damaged. DisA forms globular foci that rapidly scan along the chromosomes during sporulation, searching for lesions. When a lesion is present, DisA pauses at the lesion site. This triggers a cellular response that culminates in a temporary block in sporulation initiation. Also has diadenylate cyclase activity, catalyzing the condensation of 2 ATP molecules into cyclic di-AMP (c-di-AMP). c-di-AMP acts as a signaling molecule that couples DNA integrity with progression of sporulation. The rise in c-di-AMP level generated by DisA while scanning the chromosome, operates as a positive signal that advances sporulation; upon encountering a lesion, the DisA focus arrests at the damaged site and halts c-di-AMP synthesis. This chain is DNA integrity scanning protein DisA, found in Clostridium botulinum (strain Eklund 17B / Type B).